Reading from the N-terminus, the 741-residue chain is Translation initiation factor IF-2 (741 aa).

Basic and acidic residues-rich tracts occupy residues 48-74 (HQYR…DKPK) and 107-123 (KGKE…EKKA). The tract at residues 48–158 (HQYRPKAEKK…PQPAKKEKEL (111 aa)) is disordered. Residues 127 to 139 (AKKKGKGPAKGKK) are compositionally biased toward basic residues. Residues 140–151 (QAAPAAKQVPQP) show a composition bias toward low complexity. Residues 242–411 (ERPPVVTIMG…LLVSEMEELK (170 aa)) enclose the tr-type G domain. The tract at residues 251–258 (GHVDHGKT) is G1. 251–258 (GHVDHGKT) provides a ligand contact to GTP. The tract at residues 276-280 (GITQH) is G2. The G3 stretch occupies residues 297–300 (DTPG). GTP is bound by residues 297–301 (DTPGH) and 351–354 (NKMD). Residues 351-354 (NKMD) are G4. The tract at residues 387 to 389 (SAK) is G5.

It belongs to the TRAFAC class translation factor GTPase superfamily. Classic translation factor GTPase family. IF-2 subfamily.

It is found in the cytoplasm. In terms of biological role, one of the essential components for the initiation of protein synthesis. Protects formylmethionyl-tRNA from spontaneous hydrolysis and promotes its binding to the 30S ribosomal subunits. Also involved in the hydrolysis of GTP during the formation of the 70S ribosomal complex. The sequence is that of Translation initiation factor IF-2 (infB) from Geobacillus stearothermophilus (Bacillus stearothermophilus).